The primary structure comprises 804 residues: General transcription and DNA repair factor IIH helicase/translocase subunit XPB (804 aa).

Disordered stretches follow at residues 1–61 (MSLK…NSNE) and 220–255 (QSSK…KSSS). Residues 14-36 (PDEDLEEYSDYSDVDNYGEEDDD) show a composition bias toward acidic residues. Composition is skewed to low complexity over residues 47 to 60 (NNNK…TNSN) and 220 to 229 (QSSKQKSSKP). A compositionally biased stretch (basic and acidic residues) spans 236–255 (EDKKDITNDSSKETAEKSSS). The 163-residue stretch at 335–497 (MFGNGRARSG…DLNFLIGPKM (163 aa)) folds into the Helicase ATP-binding domain. 348 to 355 (LPCGAGKT) contributes to the ATP binding site. The DEVH box motif lies at 450–453 (DEVH). The Helicase C-terminal domain maps to 551 to 705 (QACQFLIDYH…KVITNLKGME (155 aa)). Disordered regions lie at residues 736–761 (DDGE…SSGS) and 782–804 (KQLK…TKRR). The segment covering 784–793 (LKKDSKEHHA) has biased composition (basic and acidic residues). The span at 794 to 804 (LFRKHLYTKRR) shows a compositional bias: basic residues.

Belongs to the helicase family. RAD25/XPB subfamily. As to quaternary structure, component of the 7-subunit TFIIH core complex composed of XPB/ptr8, XPD/rad15, ssl1, tfb1, tfb2, tfb4 and tfb5, which is active in NER. The core complex associates with the 3-subunit CTD-kinase module TFIIK composed of mcs2/cyclin H, mcs6/cdk7 and pmh1/tfb3 to form the 10-subunit holoenzyme (holo-TFIIH) active in transcription.

The protein localises to the nucleus. It carries out the reaction Couples ATP hydrolysis with the unwinding of duplex DNA by translocating in the 3'-5' direction.. The enzyme catalyses ATP + H2O = ADP + phosphate + H(+). Its function is as follows. Probable ATP-dependent 3'-5' DNA helicase/translocase. Binds dsDNA rather than ssDNA, unzipping it in a translocase rather than classical helicase activity. Component of the general transcription and DNA repair factor IIH (TFIIH) core complex. When complexed to CDK-activating kinase (CAK), involved in RNA transcription by RNA polymerase II. Also involved in transcription-coupled nucleotide excision repair (NER) of damaged DNA. In NER, TFIIH acts by opening DNA around the lesion to allow the excision of the damaged oligonucleotide and its replacement by a new DNA fragment. The ATPase activity of XPB/ptr8, but not its helicase activity, is required for DNA opening. In transcription, TFIIH has an essential role in transcription initiation. When the pre-initiation complex (PIC) has been established, TFIIH is required for promoter opening and promoter escape. The ATP-dependent helicase activity of XPB/ptr8 is required for promoter escape but not for promoter opening. Plays a role in mRNA export. The chain is General transcription and DNA repair factor IIH helicase/translocase subunit XPB from Schizosaccharomyces pombe (strain 972 / ATCC 24843) (Fission yeast).